We begin with the raw amino-acid sequence, 331 residues long: Ribosomal RNA small subunit methyltransferase H (331 aa).

S-adenosyl-L-methionine contacts are provided by residues 56 to 58 (GGH), aspartate 76, phenylalanine 100, aspartate 122, and glutamine 129.

Belongs to the methyltransferase superfamily. RsmH family.

It is found in the cytoplasm. The catalysed reaction is cytidine(1402) in 16S rRNA + S-adenosyl-L-methionine = N(4)-methylcytidine(1402) in 16S rRNA + S-adenosyl-L-homocysteine + H(+). Specifically methylates the N4 position of cytidine in position 1402 (C1402) of 16S rRNA. The chain is Ribosomal RNA small subunit methyltransferase H from Chromohalobacter salexigens (strain ATCC BAA-138 / DSM 3043 / CIP 106854 / NCIMB 13768 / 1H11).